Reading from the N-terminus, the 560-residue chain is NAD-dependent malic enzyme (560 aa).

Tyrosine 100 acts as the Proton donor in catalysis. Arginine 153 is an NAD(+) binding site. Lysine 171 functions as the Proton acceptor in the catalytic mechanism. 3 residues coordinate a divalent metal cation: glutamate 242, aspartate 243, and aspartate 266. NAD(+) is bound by residues aspartate 266 and asparagine 413.

The protein belongs to the malic enzymes family. Homotetramer. It depends on Mg(2+) as a cofactor. Requires Mn(2+) as cofactor.

It carries out the reaction (S)-malate + NAD(+) = pyruvate + CO2 + NADH. The catalysed reaction is oxaloacetate + H(+) = pyruvate + CO2. In Psychrobacter arcticus (strain DSM 17307 / VKM B-2377 / 273-4), this protein is NAD-dependent malic enzyme.